The chain runs to 905 residues: DNA mismatch repair protein MutS (905 aa).

The interval 272-292 (KKPPLSPPSREATGSTMAIDP) is disordered. 654–661 (GPNMAGKS) lines the ATP pocket.

This sequence belongs to the DNA mismatch repair MutS family.

In terms of biological role, this protein is involved in the repair of mismatches in DNA. It is possible that it carries out the mismatch recognition step. This protein has a weak ATPase activity. This chain is DNA mismatch repair protein MutS, found in Rhodopseudomonas palustris (strain BisB18).